A 362-amino-acid chain; its full sequence is Heat-inducible transcription repressor HrcA (362 aa).

Belongs to the HrcA family.

In terms of biological role, negative regulator of class I heat shock genes (grpE-dnaK-dnaJ and groELS operons). Prevents heat-shock induction of these operons. The polypeptide is Heat-inducible transcription repressor HrcA (Nitrobacter hamburgensis (strain DSM 10229 / NCIMB 13809 / X14)).